A 283-amino-acid chain; its full sequence is Phosphatidylserine decarboxylase proenzyme (283 aa).

Catalysis depends on charge relay system; for autoendoproteolytic cleavage activity residues D90, H143, and S248. S248 functions as the Schiff-base intermediate with substrate; via pyruvic acid; for decarboxylase activity in the catalytic mechanism. At S248 the chain carries Pyruvic acid (Ser); by autocatalysis.

It belongs to the phosphatidylserine decarboxylase family. PSD-B subfamily. Prokaryotic type I sub-subfamily. Heterodimer of a large membrane-associated beta subunit and a small pyruvoyl-containing alpha subunit. Pyruvate is required as a cofactor. In terms of processing, is synthesized initially as an inactive proenzyme. Formation of the active enzyme involves a self-maturation process in which the active site pyruvoyl group is generated from an internal serine residue via an autocatalytic post-translational modification. Two non-identical subunits are generated from the proenzyme in this reaction, and the pyruvate is formed at the N-terminus of the alpha chain, which is derived from the carboxyl end of the proenzyme. The autoendoproteolytic cleavage occurs by a canonical serine protease mechanism, in which the side chain hydroxyl group of the serine supplies its oxygen atom to form the C-terminus of the beta chain, while the remainder of the serine residue undergoes an oxidative deamination to produce ammonia and the pyruvoyl prosthetic group on the alpha chain. During this reaction, the Ser that is part of the protease active site of the proenzyme becomes the pyruvoyl prosthetic group, which constitutes an essential element of the active site of the mature decarboxylase.

The protein localises to the cell membrane. It catalyses the reaction a 1,2-diacyl-sn-glycero-3-phospho-L-serine + H(+) = a 1,2-diacyl-sn-glycero-3-phosphoethanolamine + CO2. The protein operates within phospholipid metabolism; phosphatidylethanolamine biosynthesis; phosphatidylethanolamine from CDP-diacylglycerol: step 2/2. Functionally, catalyzes the formation of phosphatidylethanolamine (PtdEtn) from phosphatidylserine (PtdSer). This chain is Phosphatidylserine decarboxylase proenzyme, found in Francisella tularensis subsp. mediasiatica (strain FSC147).